The primary structure comprises 243 residues: Pyridoxine 5'-phosphate synthase (243 aa).

Residue Asn-7 coordinates 3-amino-2-oxopropyl phosphate. 9-10 (DH) serves as a coordination point for 1-deoxy-D-xylulose 5-phosphate. Arg-18 is a 3-amino-2-oxopropyl phosphate binding site. Catalysis depends on His-43, which acts as the Proton acceptor. 1-deoxy-D-xylulose 5-phosphate is bound by residues Arg-45 and His-50. Glu-70 acts as the Proton acceptor in catalysis. Thr-100 provides a ligand contact to 1-deoxy-D-xylulose 5-phosphate. The active-site Proton donor is His-192. 3-amino-2-oxopropyl phosphate-binding positions include Gly-193 and 215–216 (GF).

This sequence belongs to the PNP synthase family. In terms of assembly, homooctamer; tetramer of dimers.

It localises to the cytoplasm. It catalyses the reaction 3-amino-2-oxopropyl phosphate + 1-deoxy-D-xylulose 5-phosphate = pyridoxine 5'-phosphate + phosphate + 2 H2O + H(+). It participates in cofactor biosynthesis; pyridoxine 5'-phosphate biosynthesis; pyridoxine 5'-phosphate from D-erythrose 4-phosphate: step 5/5. Functionally, catalyzes the complicated ring closure reaction between the two acyclic compounds 1-deoxy-D-xylulose-5-phosphate (DXP) and 3-amino-2-oxopropyl phosphate (1-amino-acetone-3-phosphate or AAP) to form pyridoxine 5'-phosphate (PNP) and inorganic phosphate. The protein is Pyridoxine 5'-phosphate synthase of Salinibacter ruber (strain DSM 13855 / M31).